Consider the following 234-residue polypeptide: Small ribosomal subunit protein uS3 (234 aa).

The 69-residue stretch at 39–107 (IRKFLKKELY…EVSINIKEVK (69 aa)) folds into the KH type-2 domain.

The protein belongs to the universal ribosomal protein uS3 family. As to quaternary structure, part of the 30S ribosomal subunit. Forms a tight complex with proteins S10 and S14.

Binds the lower part of the 30S subunit head. Binds mRNA in the 70S ribosome, positioning it for translation. The protein is Small ribosomal subunit protein uS3 of Helicobacter acinonychis (strain Sheeba).